We begin with the raw amino-acid sequence, 251 residues long: MASIQANKRLTKEYKNIVNNPPPFIIAAPHEDNILEWHYVITGPPSTPYENGQYHGTLTFPSDYPFNPPAIRMITPNGRFKENTRLCLSMSDYHPEAWNPAWSVVTILNGLLSFMTGDEQTTGSVSTSDKDKRTLAKKSKHFNTYSNFKFKNMFPDLRESNIKDIEREAALEAESKGAQQEENKAQKLATEKATSLDDISDPEDRVRIQELIKAEKDKKDQDKNPGENSNIKSLLCLILAIAIFFVGLIMK.

Topologically, residues 1 to 229 are cytoplasmic; the sequence is MASIQANKRL…DQDKNPGENS (229 aa). One can recognise a UBC core domain in the interval 5-154; the sequence is QANKRLTKEY…YSNFKFKNMF (150 aa). Cysteine 87 serves as the catalytic Glycyl thioester intermediate. The span at 173-185 shows a compositional bias: basic and acidic residues; that stretch reads AESKGAQQEENKA. The tract at residues 173–200 is disordered; the sequence is AESKGAQQEENKAQKLATEKATSLDDIS. Residues 230–250 form a helical membrane-spanning segment; the sequence is NIKSLLCLILAIAIFFVGLIM.

It belongs to the ubiquitin-conjugating enzyme family.

The protein localises to the endoplasmic reticulum membrane. The enzyme catalyses S-ubiquitinyl-[E1 ubiquitin-activating enzyme]-L-cysteine + [E2 ubiquitin-conjugating enzyme]-L-cysteine = [E1 ubiquitin-activating enzyme]-L-cysteine + S-ubiquitinyl-[E2 ubiquitin-conjugating enzyme]-L-cysteine.. It participates in protein modification; protein ubiquitination. Its function is as follows. Catalyzes the covalent attachment of ubiquitin to other proteins. Functions in degradation of misfolded or regulated proteins localized in the endoplasmic reticulum (ER) lumen or membrane via the ubiquitin-proteasome system. Cognate E2 conjugating enzyme for the DOA10 ubiquitin ligase complex, which is part of the ERAD-C pathway responsible for the rapid degradation of membrane proteins with misfolded cytoplasmic domains. The chain is Ubiquitin-conjugating enzyme E2 6 (UBC6) from Kluyveromyces lactis (strain ATCC 8585 / CBS 2359 / DSM 70799 / NBRC 1267 / NRRL Y-1140 / WM37) (Yeast).